A 70-amino-acid polypeptide reads, in one-letter code: Small ribosomal subunit protein bS21 (70 aa).

It belongs to the bacterial ribosomal protein bS21 family.

This is Small ribosomal subunit protein bS21 from Nitrosomonas eutropha (strain DSM 101675 / C91 / Nm57).